We begin with the raw amino-acid sequence, 273 residues long: 4-hydroxy-tetrahydrodipicolinate reductase (273 aa).

NAD(+) is bound by residues 12–17 (GAGGRM) and glutamate 38. Position 39 (arginine 39) interacts with NADP(+). NAD(+) is bound by residues 102–104 (GTT) and 126–129 (AANF). Catalysis depends on histidine 159, which acts as the Proton donor/acceptor. Histidine 160 serves as a coordination point for (S)-2,3,4,5-tetrahydrodipicolinate. Lysine 163 serves as the catalytic Proton donor. 169 to 170 (GT) serves as a coordination point for (S)-2,3,4,5-tetrahydrodipicolinate.

The protein belongs to the DapB family. As to quaternary structure, homotetramer.

Its subcellular location is the cytoplasm. It carries out the reaction (S)-2,3,4,5-tetrahydrodipicolinate + NAD(+) + H2O = (2S,4S)-4-hydroxy-2,3,4,5-tetrahydrodipicolinate + NADH + H(+). It catalyses the reaction (S)-2,3,4,5-tetrahydrodipicolinate + NADP(+) + H2O = (2S,4S)-4-hydroxy-2,3,4,5-tetrahydrodipicolinate + NADPH + H(+). It participates in amino-acid biosynthesis; L-lysine biosynthesis via DAP pathway; (S)-tetrahydrodipicolinate from L-aspartate: step 4/4. Functionally, catalyzes the conversion of 4-hydroxy-tetrahydrodipicolinate (HTPA) to tetrahydrodipicolinate. This is 4-hydroxy-tetrahydrodipicolinate reductase from Escherichia coli O139:H28 (strain E24377A / ETEC).